A 388-amino-acid polypeptide reads, in one-letter code: Succinyl-diaminopimelate desuccinylase (388 aa).

His84 provides a ligand contact to Zn(2+). Asp86 is an active-site residue. Asp115 contributes to the Zn(2+) binding site. The active-site Proton acceptor is the Glu146. Residues Glu147, Glu175, and His360 each contribute to the Zn(2+) site.

The protein belongs to the peptidase M20A family. DapE subfamily. Homodimer. It depends on Zn(2+) as a cofactor. Co(2+) is required as a cofactor.

The enzyme catalyses N-succinyl-(2S,6S)-2,6-diaminopimelate + H2O = (2S,6S)-2,6-diaminopimelate + succinate. It functions in the pathway amino-acid biosynthesis; L-lysine biosynthesis via DAP pathway; LL-2,6-diaminopimelate from (S)-tetrahydrodipicolinate (succinylase route): step 3/3. Catalyzes the hydrolysis of N-succinyl-L,L-diaminopimelic acid (SDAP), forming succinate and LL-2,6-diaminopimelate (DAP), an intermediate involved in the bacterial biosynthesis of lysine and meso-diaminopimelic acid, an essential component of bacterial cell walls. The polypeptide is Succinyl-diaminopimelate desuccinylase (Helicobacter pylori (strain J99 / ATCC 700824) (Campylobacter pylori J99)).